The following is a 2799-amino-acid chain: E3 ubiquitin-protein ligase UBR5 (2799 aa).

Thr-2 carries the post-translational modification N-acetylthreonine. Residues 77 to 88 (DRLELGKPDNND) are compositionally biased toward basic and acidic residues. Positions 77–175 (DRLELGKPDN…DRGSGLLGSQ (99 aa)) are disordered. Over residues 89-110 (GSKLNSNSGAGRTSRPGRTSDS) the composition is skewed to polar residues. Ser-110 carries the post-translational modification Phosphoserine. Gly residues predominate over residues 135-144 (GVGGSGGGSS). In terms of domain architecture, UBA spans 184 to 226 (VIPEELISQAQVVLQGKSRSVIIRELQRTNLDVNLAVNNLLSR). Ser-327 carries the phosphoserine modification. Residues 328–347 (FDNERGSTSKEGEPNLDKKN) are compositionally biased toward basic and acidic residues. Positions 328–352 (FDNERGSTSKEGEPNLDKKNTPVQS) are disordered. A phosphoserine mark is found at Ser-352 and Ser-578. The segment at 579–648 (PESLKNMEKA…APKEEEKVNE (70 aa)) is disordered. Positions 583 to 604 (KNMEKASKTTEAKPESKQEPVK) are enriched in basic and acidic residues. Ser-612 is subject to Phosphoserine. The span at 614–628 (ASTCSDASSIASSAS) shows a compositional bias: low complexity. Residue Thr-637 is modified to Phosphothreonine. Phosphoserine occurs at positions 808, 928, and 1018. 2 disordered regions span residues 999-1031 (AGLGRHEAGASSSDHQDPVSPPIAPPSWVPDPP) and 1052-1075 (TAATGTGQGPSTSTIPGPSTEPSV). Over residues 1017–1031 (VSPPIAPPSWVPDPP) the composition is skewed to pro residues. Residues 1052-1073 (TAATGTGQGPSTSTIPGPSTEP) are compositionally biased toward polar residues. Thr-1115 and Thr-1135 each carry phosphothreonine. The UBR-type zinc-finger motif lies at 1177 to 1245 (DTCSFTWTGA…EKCKCKTLIA (69 aa)). Residues Cys-1179, Cys-1196, Cys-1199, Cys-1208, Cys-1211, Cys-1215, His-1216, and His-1219 each coordinate Zn(2+). At Ser-1227 the chain carries Phosphoserine. 3 residues coordinate Zn(2+): Cys-1232, Cys-1234, and Cys-1240. Residues 1299–1318 (REDRNRKTASPEDSDMPDHD) are disordered. Residues Ser-1308, Ser-1355, Ser-1375, and Ser-1481 each carry the phosphoserine modification. Residues 1515–1740 (SVEPLPPRPS…PSSTSTPAAS (226 aa)) form a disordered region. Residues 1524 to 1537 (SSDQSSSSSQSQSS) are compositionally biased toward low complexity. Over residues 1538–1553 (YIIRNPQQRRISQSQP) the composition is skewed to polar residues. Ser-1549 is subject to Phosphoserine. Composition is skewed to acidic residues over residues 1559-1574 (EEQDDIVSADVEEVEV) and 1605-1614 (HDEDGSDMEL). Residues 1629 to 1638 (NHSNQDNASG) are compositionally biased toward polar residues. Low complexity-rich tracts occupy residues 1641-1657 (SVVTAATAGSEAGASSV), 1668-1681 (SNDSSDSDSSSSQS), and 1726-1740 (AASTAPSSTSTPAAS). Thr-1736 is subject to Phosphothreonine. At Ser-1741 the chain carries Phosphoserine. Position 1746 is a phosphotyrosine (Tyr-1746). Ser-1780 is subject to Phosphoserine. The segment at 1859 to 1890 (LASAGDPGHPNHPLHASQNSARRERMTAREEA) is disordered. Residues 1879 to 1890 (ARRERMTAREEA) are compositionally biased toward basic and acidic residues. Thr-1969 is subject to Phosphothreonine. The interval 1984 to 2021 (GIDNEDSEHENDDDTNQSATLNDKDDDSLPAETGQNHP) is disordered. Positions 1985-1998 (IDNEDSEHENDDDT) are enriched in acidic residues. Residues Ser-1990, Ser-2026, and Ser-2028 each carry the phosphoserine modification. Phosphothreonine is present on Thr-2030. The residue at position 2076 (Ser-2076) is a Phosphoserine. The interval 2117–2142 (RQKKEGEEQPVLPEETESSKPGPSAH) is disordered. Thr-2213 carries the post-translational modification Phosphothreonine. 2 positions are modified to phosphoserine: Ser-2241 and Ser-2289. Residues 2323–2392 (HTSLMQRLRN…PSDDPEPLPA (70 aa)) form a disordered region. Basic and acidic residues-rich tracts occupy residues 2332–2348 (NRGERDREREREREMRR) and 2356–2368 (SRRDRDRDFRRQL). The region spanning 2377 to 2454 (PASEGNPSDD…AMELIIAHGR (78 aa)) is the PABC domain. The 338-residue stretch at 2462-2799 (LDLGLVDSSE…AIKTKNFGFV (338 aa)) folds into the HECT domain. 3 positions are modified to phosphoserine: Ser-2469, Ser-2484, and Ser-2486. The disordered stretch occupies residues 2473–2493 (VQQENRKRHGSSRSVVDMDLD). The active-site Glycyl thioester intermediate is the Cys-2768.

Belongs to the UBR5 family. In terms of assembly, homotetramer; composed of a dimer of dimers. Associates with CDK9 and TFIIS/TCEA1 and forms a transcription regulatory complex made of CDK9, RNAP II, UBR5 and TFIIS/TCEA1 that can stimulate target gene transcription (e.g. gamma fibrinogen/FGG) by recruiting their promoters. Associates with the E3 ligase complex containing DYRK2, EDD/UBR5, DDB1 and DCAF1 proteins (EDVP complex). Binds TOPBP1. Interacts with PIH1D1. Interacts with CIB1. As to quaternary structure, (Microbial infection) Interacts with human T-cell leukemia virus 1/HTLV-1 protein HBZ; this interaction modulates HBZ stability. As to expression, widely expressed. Most abundant in testis and expressed at high levels in brain, pituitary and kidney.

The protein resides in the nucleus. The protein localises to the cytoplasm. It carries out the reaction S-ubiquitinyl-[E2 ubiquitin-conjugating enzyme]-L-cysteine + [acceptor protein]-L-lysine = [E2 ubiquitin-conjugating enzyme]-L-cysteine + N(6)-ubiquitinyl-[acceptor protein]-L-lysine.. It functions in the pathway protein modification; protein ubiquitination. Its function is as follows. E3 ubiquitin-protein ligase involved in different protein quality control pathways in the cytoplasm and nucleus. Mainly acts as a ubiquitin chain elongator that extends pre-ubiquitinated substrates. Component of the N-end rule pathway: ubiquitinates proteins bearing specific N-terminal residues that are destabilizing according to the N-end rule, leading to their degradation. Recognizes type-1 N-degrons, containing positively charged amino acids (Arg, Lys and His). Together with UBR4, part of a cytoplasm protein quality control pathway that prevents protein aggregation by catalyzing assembly of heterotypic 'Lys-11'-/'Lys-48'-linked branched ubiquitin chains on aggregated proteins, leading to substrate recognition by the segregase p97/VCP and degradation by the proteasome: UBR5 is probably branching multiple 'Lys-48'-linked chains of substrates initially modified with mixed conjugates by UBR4. Together with ITCH, catalyzes 'Lys-48'-/'Lys-63'-branched ubiquitination of TXNIP, leading to its degradation: UBR5 mediates branching of 'Lys-48'-linked chains of substrates initially modified with 'Lys-63'-linked conjugates by ITCH. Catalytic component of a nuclear protein quality control pathway that mediates ubiquitination and degradation of unpaired transcription factors (i.e. transcription factors that are not assembled into functional multiprotein complexes): specifically recognizes and binds degrons that are not accessible when transcription regulators are associated with their coactivators. Ubiquitinates various unpaired transcription regulator (MYC, SUPT4H1, SUPT5H, CDC20 and MCRS1), as well as ligand-bound nuclear receptors (ESR1, NR1H3, NR3C1, PGR, RARA, RXRA AND VDR) that are not associated with their nuclear receptor coactivators (NCOAs). Involved in maturation and/or transcriptional regulation of mRNA by mediating polyubiquitination and activation of CDK9. Also acts as a regulator of DNA damage response by acting as a suppressor of RNF168, an E3 ubiquitin-protein ligase that promotes accumulation of 'Lys-63'-linked histone H2A and H2AX at DNA damage sites, thereby acting as a guard against excessive spreading of ubiquitinated chromatin at damaged chromosomes. Regulates DNA topoisomerase II binding protein (TopBP1) in the DNA damage response. Ubiquitinates acetylated PCK1. Acts as a positive regulator of the canonical Wnt signaling pathway by mediating (1) ubiquitination and stabilization of CTNNB1, and (2) 'Lys-48'-linked ubiquitination and degradation of TLE3. Promotes disassembly of the mitotic checkpoint complex (MCC) from the APC/C complex by catalyzing ubiquitination of BUB1B, BUB3 and CDC20. Plays an essential role in extraembryonic development. Required for the maintenance of skeletal tissue homeostasis by acting as an inhibitor of hedgehog (HH) signaling. The sequence is that of E3 ubiquitin-protein ligase UBR5 (UBR5) from Homo sapiens (Human).